A 52-amino-acid chain; its full sequence is Dibenzothiophene metabolism operon protein NahQ/DoxH (52 aa).

It participates in aromatic compound metabolism; naphthalene degradation. May be involved in the conversion of 2-hydroxy-4-(2'-oxo-3,5-cyclohexadienyl)-buta-2,4-dienoate to cis-O-hydroxybenzylidenepyruvate. DoxH and DoxJ encode different enzymes that may have interchangeable functions. This is Dibenzothiophene metabolism operon protein NahQ/DoxH (nahQ) from Pseudomonas putida (Arthrobacter siderocapsulatus).